Reading from the N-terminus, the 91-residue chain is Large ribosomal subunit protein bL31B-1 (91 aa).

This sequence belongs to the bacterial ribosomal protein bL31 family. Type B subfamily. As to quaternary structure, part of the 50S ribosomal subunit.

The sequence is that of Large ribosomal subunit protein bL31B-1 from Streptomyces avermitilis (strain ATCC 31267 / DSM 46492 / JCM 5070 / NBRC 14893 / NCIMB 12804 / NRRL 8165 / MA-4680).